A 535-amino-acid polypeptide reads, in one-letter code: INSYN2B protein (535 aa).

Disordered stretches follow at residues 23–85 (LVKQ…SFPR), 215–346 (EARE…RSSS), and 360–387 (KLPS…PRQE). Over residues 46 to 59 (KNPTGVTEVNTQTP) the composition is skewed to polar residues. Residues 219–232 (SALSPESSAEESNS) show a composition bias toward low complexity. Composition is skewed to polar residues over residues 258–269 (CSNTNSSASNMP), 307–319 (RTHS…SRSQ), and 361–375 (LPSQ…TGVG). Residues 411-448 (DLQGRLQSVEESLHSNQEKIKVLLNVIQDLEKAHALTE) are a coiled coil. A disordered region spans residues 493–528 (LEEAEPTEEAPSPPKSPAEAPVPEKQDLRRKSKKVK).

The protein belongs to the INSYN2 family.

This chain is INSYN2B protein (Insyn2b), found in Mus musculus (Mouse).